A 260-amino-acid chain; its full sequence is Taurine import ATP-binding protein TauB (260 aa).

An ABC transporter domain is found at 6 to 235; it reads AQQVSVVYAS…RYAHGEPMRS (230 aa). 40 to 47 is a binding site for ATP; it reads GASGCGKS.

This sequence belongs to the ABC transporter superfamily. Taurine importer (TC 3.A.1.17.1) family. In terms of assembly, the complex is composed of two ATP-binding proteins (TauB), two transmembrane proteins (TauC) and a solute-binding protein (TauA).

The protein resides in the cell inner membrane. It carries out the reaction taurine(out) + ATP + H2O = taurine(in) + ADP + phosphate + H(+). Part of the ABC transporter complex TauABC involved in taurine import. Responsible for energy coupling to the transport system. The protein is Taurine import ATP-binding protein TauB of Burkholderia pseudomallei (strain 1710b).